The sequence spans 177 residues: Large ribosomal subunit protein uL6 (177 aa).

It belongs to the universal ribosomal protein uL6 family. In terms of assembly, part of the 50S ribosomal subunit.

Functionally, this protein binds to the 23S rRNA, and is important in its secondary structure. It is located near the subunit interface in the base of the L7/L12 stalk, and near the tRNA binding site of the peptidyltransferase center. This is Large ribosomal subunit protein uL6 from Rhodopseudomonas palustris (strain BisB18).